The following is a 1360-amino-acid chain: Ubiquitin carboxyl-terminal hydrolase 19 (1360 aa).

Residues 1 to 46 (MSAGASATGPRRGPPGLEEATSKKKQKDRANLESKDGDARRVSLPR) are disordered. The Cytoplasmic portion of the chain corresponds to 1–1333 (MSAGASATGP…TTPDEGCLRY (1333 aa)). Residues 28 to 46 (DRANLESKDGDARRVSLPR) are compositionally biased toward basic and acidic residues. Residues 51–140 (KDELLLDWRQ…VPLLTWPSLL (90 aa)) enclose the CS 1 domain. Residues 163–239 (PIALEPGSEP…APSFLSDSAT (77 aa)) are disordered. Over residues 170–181 (SEPRRAKQEARN) the composition is skewed to basic and acidic residues. Gly residues predominate over residues 189 to 199 (GEVGSGAGPGT). A Phosphoserine modification is found at Ser-220. In terms of domain architecture, CS 2 spans 322 to 424 (LAFVKNDSYE…RQSQRWGGLE (103 aa)). Positions 432-482 (VGGAKVAVPTGPTPLDSTPPGGGPHPLTGQEEARAVEKEKPKARSEDSGLD) are disordered. Residues 462–478 (EEARAVEKEKPKARSED) show a composition bias toward basic and acidic residues. The USP domain occupies 539–1256 (TGLVNLGNTC…YAYVLFYRRR (718 aa)). Cys-548 serves as the catalytic Nucleophile. 8 residues coordinate Zn(2+): Cys-833, Cys-836, Cys-850, Cys-853, Cys-859, Cys-863, His-871, and Cys-875. The segment at 833 to 875 (CAACQRKQQSEEEKLKRCTRCYRVGYCNQFCQKTHWPDHKGLC) adopts an MYND-type zinc-finger fold. The tract at residues 965-988 (DTGAHRVWPPADRGPVPSTSGLSS) is disordered. Catalysis depends on His-1207, which acts as the Proton acceptor. Over residues 1259–1274 (PVERPPRASHSEHHPD) the composition is skewed to basic and acidic residues. Residues 1259 to 1281 (PVERPPRASHSEHHPDLGPAAEA) form a disordered region. A helical transmembrane segment spans residues 1334–1354 (FVLGTVAALVALVLNVFYPLV). The Lumenal portion of the chain corresponds to 1355–1360 (SQSRWR).

In terms of assembly, interacts with RNF123. Interacts with BIRC2/c-IAP1, BIRC3/c-IAP2 and XIAP/BIRC4. Interacts with HIF1A (via N-terminus).

The protein resides in the endoplasmic reticulum membrane. It catalyses the reaction Thiol-dependent hydrolysis of ester, thioester, amide, peptide and isopeptide bonds formed by the C-terminal Gly of ubiquitin (a 76-residue protein attached to proteins as an intracellular targeting signal).. Deubiquitinating enzyme that regulates the degradation of various proteins by removing ubiquitin moieties, thereby preventing their proteasomal degradation. Stabilizes RNF123, which promotes CDKN1B degradation and contributes to cell proliferation. Decreases the levels of ubiquitinated proteins during skeletal muscle formation and acts to repress myogenesis. Modulates transcription of major myofibrillar proteins. Also involved in turnover of endoplasmic-reticulum-associated degradation (ERAD) substrates. Mechanistically, deubiquitinates and thereby stabilizes several E3 ligases involved in the ERAD pathway including SYVN1 or MARCHF6. Regulates the stability of other E3 ligases including BIRC2/c-IAP1 and BIRC3/c-IAP2 by preventing their ubiquitination. Required for cells to mount an appropriate response to hypoxia by rescuing HIF1A from degradation in a non-catalytic manner and by mediating the deubiquitination of FUNDC1. Attenuates mitochondrial damage and ferroptosis by targeting and stabilizing NADPH oxidase 4/NOX4. Negatively regulates TNF-alpha- and IL-1beta-triggered NF-kappa-B activation by hydrolyzing 'Lys-27'- and 'Lys-63'-linked polyubiquitin chains from MAP3K7. Modulates also the protein level and aggregation of polyQ-expanded huntingtin/HTT through HSP90AA1. This chain is Ubiquitin carboxyl-terminal hydrolase 19 (Usp19), found in Mus musculus (Mouse).